Consider the following 389-residue polypeptide: Chorismate synthase (389 aa).

Positions 40 and 46 each coordinate NADP(+). FMN is bound by residues 130-132, 251-252, G297, 312-316, and R338; these read RAS, QA, and KPIST.

Belongs to the chorismate synthase family. In terms of assembly, homotetramer. FMNH2 is required as a cofactor.

The enzyme catalyses 5-O-(1-carboxyvinyl)-3-phosphoshikimate = chorismate + phosphate. It functions in the pathway metabolic intermediate biosynthesis; chorismate biosynthesis; chorismate from D-erythrose 4-phosphate and phosphoenolpyruvate: step 7/7. In terms of biological role, catalyzes the anti-1,4-elimination of the C-3 phosphate and the C-6 proR hydrogen from 5-enolpyruvylshikimate-3-phosphate (EPSP) to yield chorismate, which is the branch point compound that serves as the starting substrate for the three terminal pathways of aromatic amino acid biosynthesis. This reaction introduces a second double bond into the aromatic ring system. The chain is Chorismate synthase from Solibacter usitatus (strain Ellin6076).